A 284-amino-acid chain; its full sequence is Pseudopaline exporter CntI (284 aa).

A run of 10 helical transmembrane segments spans residues 2–22 (VLDL…TFSV), 34–54 (LPAA…IYLL), 74–94 (GVMG…IPLA), 96–116 (ASIL…LFLG), 122–142 (AVYW…KPFS), 147–167 (SVYA…SVAI), 179–199 (IVFY…WSDF), 209–229 (GLLL…TRAF), 236–256 (IVAV…WLFW), and 259–279 (VPDA…IALS). EamA domains follow at residues 8-138 (SGVL…LMIV) and 151-279 (VVGL…IALS).

The protein belongs to the EamA transporter family.

The protein resides in the cell inner membrane. Its function is as follows. Transports the metallophore pseudopaline, which is involved in the acquisition of nickel and zinc, and thus enables bacterial growth inside the host, where metal access is limited. Is probably involved in the export of pseudopaline. In Pseudomonas aeruginosa (strain UCBPP-PA14), this protein is Pseudopaline exporter CntI.